The sequence spans 70 residues: Large ribosomal subunit protein eL38 (70 aa).

K4 is covalently cross-linked (Glycyl lysine isopeptide (Lys-Gly) (interchain with G-Cter in SUMO2)). K9 is subject to N6-acetyllysine; alternate. A Glycyl lysine isopeptide (Lys-Gly) (interchain with G-Cter in SUMO2); alternate cross-link involves residue K9. Position 67 is an N6-acetyllysine (K67).

This sequence belongs to the eukaryotic ribosomal protein eL38 family. As to quaternary structure, component of the large ribosomal subunit.

The protein resides in the cytoplasm. In terms of biological role, component of the large ribosomal subunit. The ribosome is a large ribonucleoprotein complex responsible for the synthesis of proteins in the cell. The protein is Large ribosomal subunit protein eL38 (RPL38) of Macaca fascicularis (Crab-eating macaque).